Consider the following 261-residue polypeptide: Hydroxyethylthiazole kinase (261 aa).

Met38 is a substrate binding site. Residues Arg114 and Thr159 each contribute to the ATP site. Gly186 lines the substrate pocket.

It belongs to the Thz kinase family. The cofactor is Mg(2+).

The enzyme catalyses 5-(2-hydroxyethyl)-4-methylthiazole + ATP = 4-methyl-5-(2-phosphooxyethyl)-thiazole + ADP + H(+). The protein operates within cofactor biosynthesis; thiamine diphosphate biosynthesis; 4-methyl-5-(2-phosphoethyl)-thiazole from 5-(2-hydroxyethyl)-4-methylthiazole: step 1/1. Functionally, catalyzes the phosphorylation of the hydroxyl group of 4-methyl-5-beta-hydroxyethylthiazole (THZ). The protein is Hydroxyethylthiazole kinase of Streptococcus suis (strain 05ZYH33).